Reading from the N-terminus, the 225-residue chain is PKHD-type hydroxylase YbiX (225 aa).

A Fe2OG dioxygenase domain is found at Thr78–Ser177. Fe cation-binding residues include His96, Asp98, and His158. 2-oxoglutarate is bound at residue Arg168.

Fe(2+) serves as cofactor. The cofactor is L-ascorbate.

The chain is PKHD-type hydroxylase YbiX from Escherichia coli O6:K15:H31 (strain 536 / UPEC).